A 219-amino-acid chain; its full sequence is Small ribosomal subunit protein uS3c (219 aa).

The region spanning 39 to 109 (IRQYIEKNLS…QIRINVIEVK (71 aa)) is the KH type-2 domain.

This sequence belongs to the universal ribosomal protein uS3 family. Part of the 30S ribosomal subunit.

The protein localises to the plastid. It localises to the cyanelle. The sequence is that of Small ribosomal subunit protein uS3c (rps3) from Cyanophora paradoxa.